Reading from the N-terminus, the 343-residue chain is Glucokinase (343 aa).

ATP is bound at residue 18-23; sequence GDIGGT.

Belongs to the bacterial glucokinase family.

The protein localises to the cytoplasm. The catalysed reaction is D-glucose + ATP = D-glucose 6-phosphate + ADP + H(+). This is Glucokinase from Brucella melitensis biotype 1 (strain ATCC 23456 / CCUG 17765 / NCTC 10094 / 16M).